Consider the following 141-residue polypeptide: Large ribosomal subunit protein uL16 (141 aa).

The protein belongs to the universal ribosomal protein uL16 family. As to quaternary structure, part of the 50S ribosomal subunit.

Functionally, binds 23S rRNA and is also seen to make contacts with the A and possibly P site tRNAs. The protein is Large ribosomal subunit protein uL16 of Deinococcus geothermalis (strain DSM 11300 / CIP 105573 / AG-3a).